The following is a 602-amino-acid chain: Elongation factor 4 (602 aa).

The 184-residue stretch at 7-190 folds into the tr-type G domain; the sequence is KHIRNFCIVA…AVVQKVPAPS (184 aa). Residues 19–24 and 137–140 contribute to the GTP site; these read DHGKST and NKID.

Belongs to the TRAFAC class translation factor GTPase superfamily. Classic translation factor GTPase family. LepA subfamily.

It is found in the cell membrane. It carries out the reaction GTP + H2O = GDP + phosphate + H(+). Functionally, required for accurate and efficient protein synthesis under certain stress conditions. May act as a fidelity factor of the translation reaction, by catalyzing a one-codon backward translocation of tRNAs on improperly translocated ribosomes. Back-translocation proceeds from a post-translocation (POST) complex to a pre-translocation (PRE) complex, thus giving elongation factor G a second chance to translocate the tRNAs correctly. Binds to ribosomes in a GTP-dependent manner. The protein is Elongation factor 4 of Clostridium acetobutylicum (strain ATCC 824 / DSM 792 / JCM 1419 / IAM 19013 / LMG 5710 / NBRC 13948 / NRRL B-527 / VKM B-1787 / 2291 / W).